Consider the following 450-residue polypeptide: Tubulin beta-2 chain (450 aa).

8 residues coordinate GTP: Gln11, Glu69, Ser138, Gly142, Thr143, Gly144, Asn204, and Asn226. Glu69 is a binding site for Mg(2+). The tract at residues 428 to 450 (ATAEDDVDGYAEGEAGETYESEQ) is disordered. Over residues 429–450 (TAEDDVDGYAEGEAGETYESEQ) the composition is skewed to acidic residues.

This sequence belongs to the tubulin family. Dimer of alpha and beta chains. A typical microtubule is a hollow water-filled tube with an outer diameter of 25 nm and an inner diameter of 15 nm. Alpha-beta heterodimers associate head-to-tail to form protofilaments running lengthwise along the microtubule wall with the beta-tubulin subunit facing the microtubule plus end conferring a structural polarity. Microtubules usually have 13 protofilaments but different protofilament numbers can be found in some organisms and specialized cells. Requires Mg(2+) as cofactor. Cleaved by caspase ced-3 in vitro.

The protein resides in the cytoplasm. It is found in the cytoskeleton. Its function is as follows. Tubulin is the major constituent of microtubules, a cylinder consisting of laterally associated linear protofilaments composed of alpha- and beta-tubulin heterodimers. Microtubules grow by the addition of GTP-tubulin dimers to the microtubule end, where a stabilizing cap forms. Below the cap, tubulin dimers are in GDP-bound state, owing to GTPase activity of alpha-tubulin. Required for the normal dynamic behavior of the non-centrosomal microtubules in the epidermal syncytium. Involved in the redistribution of microtubule end-binding protein EB1/ebp-2 caused by wounding. Required to modulate expression in the epidermis of antimicrobial peptides, such as nlp-29, after wounding, or fungal infection. The protein is Tubulin beta-2 chain (tbb-2) of Caenorhabditis elegans.